Reading from the N-terminus, the 239-residue chain is Ubiquinone biosynthesis O-methyltransferase (239 aa).

Positions 44, 63, 84, and 128 each coordinate S-adenosyl-L-methionine.

It belongs to the methyltransferase superfamily. UbiG/COQ3 family.

It carries out the reaction a 3-demethylubiquinol + S-adenosyl-L-methionine = a ubiquinol + S-adenosyl-L-homocysteine + H(+). It catalyses the reaction a 3-(all-trans-polyprenyl)benzene-1,2-diol + S-adenosyl-L-methionine = a 2-methoxy-6-(all-trans-polyprenyl)phenol + S-adenosyl-L-homocysteine + H(+). It participates in cofactor biosynthesis; ubiquinone biosynthesis. In terms of biological role, O-methyltransferase that catalyzes the 2 O-methylation steps in the ubiquinone biosynthetic pathway. The protein is Ubiquinone biosynthesis O-methyltransferase of Xanthomonas campestris pv. campestris (strain 8004).